The chain runs to 60 residues: Large ribosomal subunit protein bL32 (60 aa).

The segment covering 1–16 (MAVPRRKTSPSRRGMR) has biased composition (basic residues). Positions 1–60 (MAVPRRKTSPSRRGMRRSADALKRPTYAEDKDSGELRRPHHLDLKTGMYKGRQVIKKKDA) are disordered. Basic and acidic residues predominate over residues 17–44 (RSADALKRPTYAEDKDSGELRRPHHLDL).

This sequence belongs to the bacterial ribosomal protein bL32 family.

The protein is Large ribosomal subunit protein bL32 of Rhodopseudomonas palustris (strain BisB5).